The following is a 32-amino-acid chain: Enhancer of rudimentary homolog (32 aa).

This sequence belongs to the E(R) family. Homodimer. Component of the methylosome, a 20S complex containing at least CLNS1A/pICln, PRMT5/SKB1, WDR77/MEP50, PRMT1 and ERH. Interacts with CHTOP.

It localises to the nucleus. In terms of biological role, may have a role in the cell cycle. Functionally, AP 3910 has antibacterial activity against B.megaterium. The polypeptide is Enhancer of rudimentary homolog (ERH) (Sus scrofa (Pig)).